Consider the following 213-residue polypeptide: NADH-quinone oxidoreductase subunit C (213 aa).

Belongs to the complex I 30 kDa subunit family. In terms of assembly, NDH-1 is composed of 15 different subunits. Subunits NuoB, C, D, E, F, and G constitute the peripheral sector of the complex.

It is found in the cell membrane. The enzyme catalyses a quinone + NADH + 5 H(+)(in) = a quinol + NAD(+) + 4 H(+)(out). NDH-1 shuttles electrons from NADH, via FMN and iron-sulfur (Fe-S) centers, to quinones in the respiratory chain. The immediate electron acceptor for the enzyme in this species is believed to be a menaquinone. Couples the redox reaction to proton translocation (for every two electrons transferred, four hydrogen ions are translocated across the cytoplasmic membrane), and thus conserves the redox energy in a proton gradient. The polypeptide is NADH-quinone oxidoreductase subunit C (Deinococcus geothermalis (strain DSM 11300 / CIP 105573 / AG-3a)).